Reading from the N-terminus, the 434-residue chain is Urokinase-type plasminogen activator (434 aa).

The signal sequence occupies residues 1-20; it reads MKLIIFLTVTLCTLVTGLDS. Residues 36–72 form the EGF-like domain; it reads QHRECQCLNGGTCITYRFFSQIKRCLCPEGYGGLHCE. Cystine bridges form between cysteine 40-cysteine 48, cysteine 42-cysteine 60, cysteine 62-cysteine 71, cysteine 79-cysteine 158, cysteine 96-cysteine 139, cysteine 128-cysteine 152, cysteine 162-cysteine 296, cysteine 202-cysteine 218, cysteine 210-cysteine 285, cysteine 310-cysteine 379, cysteine 342-cysteine 358, and cysteine 369-cysteine 397. In terms of domain architecture, Kringle spans 79-158; that stretch reads CYSGNGEDYR…ETPCSTIEKC (80 aa). Positions 159–172 are connecting peptide; that stretch reads ERTCGQRSFSKYFK. The 249-residue stretch at 173-421 folds into the Peptidase S1 domain; that stretch reads IVGGSQAEVE…YLNWIDSNMN (249 aa). Histidine 217 functions as the Charge relay system in the catalytic mechanism. An N-linked (GlcNAc...) asparagine glycan is attached at asparagine 228. Aspartate 272 serves as the catalytic Charge relay system. Residue serine 373 is the Charge relay system of the active site.

This sequence belongs to the peptidase S1 family.

It localises to the secreted. It carries out the reaction Specific cleavage of Arg-|-Val bond in plasminogen to form plasmin.. Its function is as follows. Specifically cleaves the zymogen plasminogen to form the active enzyme plasmin. The chain is Urokinase-type plasminogen activator (PLAU) from Gallus gallus (Chicken).